Consider the following 304-residue polypeptide: Type II methyltransferase M.HindV (304 aa).

Positions 1-299 constitute an SAM-dependent MTase C5-type domain; it reads MKCVDLFSGC…SAIINFEKEP (299 aa). The active site involves C75.

The protein belongs to the class I-like SAM-binding methyltransferase superfamily. C5-methyltransferase family.

It carries out the reaction a 2'-deoxycytidine in DNA + S-adenosyl-L-methionine = a 5-methyl-2'-deoxycytidine in DNA + S-adenosyl-L-homocysteine + H(+). A methylase, recognizes the double-stranded sequence 5'-GRCGYC-3', methylates C-? on both strands, and protects the DNA from cleavage by the HindV endonuclease. This chain is Type II methyltransferase M.HindV (hindVM), found in Haemophilus influenzae (strain ATCC 51907 / DSM 11121 / KW20 / Rd).